Reading from the N-terminus, the 149-residue chain is Endoribonuclease YbeY (149 aa).

Residues histidine 101, histidine 105, and histidine 111 each contribute to the Zn(2+) site.

Belongs to the endoribonuclease YbeY family. Requires Zn(2+) as cofactor.

The protein localises to the cytoplasm. Its function is as follows. Single strand-specific metallo-endoribonuclease involved in late-stage 70S ribosome quality control and in maturation of the 3' terminus of the 16S rRNA. The chain is Endoribonuclease YbeY from Thermotoga neapolitana (strain ATCC 49049 / DSM 4359 / NBRC 107923 / NS-E).